Consider the following 374-residue polypeptide: Alanine racemase (374 aa).

The Proton acceptor; specific for D-alanine role is filled by K35. K35 carries the N6-(pyridoxal phosphate)lysine modification. A substrate-binding site is contributed by R133. Y264 acts as the Proton acceptor; specific for L-alanine in catalysis. M312 lines the substrate pocket.

It belongs to the alanine racemase family. Requires pyridoxal 5'-phosphate as cofactor.

The catalysed reaction is L-alanine = D-alanine. The protein operates within amino-acid biosynthesis; D-alanine biosynthesis; D-alanine from L-alanine: step 1/1. Its function is as follows. Catalyzes the interconversion of L-alanine and D-alanine. May also act on other amino acids. In Thermobifida fusca (strain YX), this protein is Alanine racemase (alr).